Here is a 252-residue protein sequence, read N- to C-terminus: tRNA pseudouridine synthase A (252 aa).

The Nucleophile role is filled by aspartate 52. A substrate-binding site is contributed by tyrosine 111.

This sequence belongs to the tRNA pseudouridine synthase TruA family. Homodimer.

It carries out the reaction uridine(38/39/40) in tRNA = pseudouridine(38/39/40) in tRNA. In terms of biological role, formation of pseudouridine at positions 38, 39 and 40 in the anticodon stem and loop of transfer RNAs. The chain is tRNA pseudouridine synthase A from Methylorubrum populi (strain ATCC BAA-705 / NCIMB 13946 / BJ001) (Methylobacterium populi).